Reading from the N-terminus, the 216-residue chain is Ephrin-A1 (216 aa).

The first 28 residues, 1-28 (MMELYRAAVQLIVGVGLGVGLWLREAQG), serve as a signal peptide directing secretion. Residues 29 to 161 (ERHIVFWNSS…RLRVHVSGRT (133 aa)) enclose the Ephrin RBD domain. Asparagine 36 carries an N-linked (GlcNAc...) asparagine glycan. A disulfide bridge connects residues cysteine 61 and cysteine 102. Residues 162–181 (TPPPVNVHTPRSHIQSDEPE) form a disordered region. A lipid anchor (GPI-anchor amidated serine) is attached at serine 195. Positions 196–216 (AAPGTPCTLYGLLLAALLLRL) are cleaved as a propeptide — removed in mature form.

It belongs to the ephrin family. Binds to the receptor tyrosine kinases EPHA2, EPHA4, EPHA5, EPHA6 and EPHA7. Also binds with low affinity to EPHA1.

It localises to the membrane. In terms of biological role, cell surface GPI-bound ligand for Eph receptors, a family of receptor tyrosine kinases which are crucial for migration, repulsion and adhesion during neuronal, vascular and epithelial development. Binds promiscuously Eph receptors residing on adjacent cells, leading to contact-dependent bidirectional signaling into neighboring cells. This Xenopus laevis (African clawed frog) protein is Ephrin-A1 (efna1).